The following is a 48-amino-acid chain: Toxin CSTX-14 (48 aa).

Disulfide bonds link Cys-3–Cys-18, Cys-10–Cys-27, Cys-17–Cys-42, and Cys-29–Cys-40.

This sequence belongs to the neurotoxin 19 (CSTX) family. 12 subfamily. As to quaternary structure, heterodimer of A and B chains; disulfide-linked. Contains 4 disulfide bonds. As to expression, expressed by the venom gland.

The protein localises to the secreted. The polypeptide is Toxin CSTX-14 (Cupiennius salei (American wandering spider)).